Here is a 24-residue protein sequence, read N- to C-terminus: Brevinin-1SPc (24 aa).

Residues cysteine 18 and cysteine 24 are joined by a disulfide bond.

As to expression, expressed by the skin glands.

Its subcellular location is the secreted. Antimicrobial peptide with activity against Gram-negative and Gram-positive bacteria and fungi. Also shows hemolytic activity. The chain is Brevinin-1SPc from Lithobates septentrionalis (Mink frog).